A 341-amino-acid polypeptide reads, in one-letter code: Serine/threonine-protein kinase PDIK1L (341 aa).

One can recognise a Protein kinase domain in the interval 8–334 (YDLIREVGRG…LELRLVQIAF (327 aa)). ATP is bound by residues 14–22 (VGRGSYGVV) and Lys-37. The Proton acceptor role is filled by Asp-164.

This sequence belongs to the protein kinase superfamily. Ser/Thr protein kinase family. As to expression, expressed in liver, kidney, pancreas, spleen, thymus and prostate.

It is found in the nucleus. It catalyses the reaction L-seryl-[protein] + ATP = O-phospho-L-seryl-[protein] + ADP + H(+). The catalysed reaction is L-threonyl-[protein] + ATP = O-phospho-L-threonyl-[protein] + ADP + H(+). The polypeptide is Serine/threonine-protein kinase PDIK1L (PDIK1L) (Homo sapiens (Human)).